The sequence spans 202 residues: Holliday junction branch migration complex subunit RuvA (202 aa).

The segment at methionine 1 to leucine 64 is domain I. Residues threonine 65–isoleucine 146 form a domain II region. Residues lysine 147–methionine 155 form a flexible linker region. The domain III stretch occupies residues methionine 155–lysine 202.

Belongs to the RuvA family. As to quaternary structure, homotetramer. Forms an RuvA(8)-RuvB(12)-Holliday junction (HJ) complex. HJ DNA is sandwiched between 2 RuvA tetramers; dsDNA enters through RuvA and exits via RuvB. An RuvB hexamer assembles on each DNA strand where it exits the tetramer. Each RuvB hexamer is contacted by two RuvA subunits (via domain III) on 2 adjacent RuvB subunits; this complex drives branch migration. In the full resolvosome a probable DNA-RuvA(4)-RuvB(12)-RuvC(2) complex forms which resolves the HJ.

The protein resides in the cytoplasm. Functionally, the RuvA-RuvB-RuvC complex processes Holliday junction (HJ) DNA during genetic recombination and DNA repair, while the RuvA-RuvB complex plays an important role in the rescue of blocked DNA replication forks via replication fork reversal (RFR). RuvA specifically binds to HJ cruciform DNA, conferring on it an open structure. The RuvB hexamer acts as an ATP-dependent pump, pulling dsDNA into and through the RuvAB complex. HJ branch migration allows RuvC to scan DNA until it finds its consensus sequence, where it cleaves and resolves the cruciform DNA. This chain is Holliday junction branch migration complex subunit RuvA, found in Elusimicrobium minutum (strain Pei191).